Reading from the N-terminus, the 156-residue chain is 6,7-dimethyl-8-ribityllumazine synthase (156 aa).

Residues F22, 57–59, and 81–83 contribute to the 5-amino-6-(D-ribitylamino)uracil site; these read AYE and SVI. 86–87 provides a ligand contact to (2S)-2-hydroxy-3-oxobutyl phosphate; sequence GT. H89 acts as the Proton donor in catalysis. Residue F114 coordinates 5-amino-6-(D-ribitylamino)uracil. Position 128 (R128) interacts with (2S)-2-hydroxy-3-oxobutyl phosphate.

It belongs to the DMRL synthase family. As to quaternary structure, forms an icosahedral capsid composed of 60 subunits, arranged as a dodecamer of pentamers.

It catalyses the reaction (2S)-2-hydroxy-3-oxobutyl phosphate + 5-amino-6-(D-ribitylamino)uracil = 6,7-dimethyl-8-(1-D-ribityl)lumazine + phosphate + 2 H2O + H(+). The protein operates within cofactor biosynthesis; riboflavin biosynthesis; riboflavin from 2-hydroxy-3-oxobutyl phosphate and 5-amino-6-(D-ribitylamino)uracil: step 1/2. Functionally, catalyzes the formation of 6,7-dimethyl-8-ribityllumazine by condensation of 5-amino-6-(D-ribitylamino)uracil with 3,4-dihydroxy-2-butanone 4-phosphate. This is the penultimate step in the biosynthesis of riboflavin. The chain is 6,7-dimethyl-8-ribityllumazine synthase from Photobacterium leiognathi.